A 447-amino-acid polypeptide reads, in one-letter code: MDQTCSLESFLNHVQKRDPHQTEFAQAVREVMTTLWPFLEQNPRYRHMSLLERLVEPERVIQFRVVWLDDKNQVQVNRAWRVQFNSAIGPYKGGMRFHPSVNLSILKFLGFEQTFKNALTTLPMGGGKGGSDFDPKGKSEGEVMRFCQALMTELYRHLGPDTDVPAGDIGVGGREVGFMAGMMRKLSNNSACVFTGKGLSFGGSLIRPEATGYGLVYFTEAMLKRHGLGFEGMRVAVSGSGNVAQYAIEKAMAFGARVVTASDSSGTVVDESGFTPEKLARLCEIKASRDGRVADYAREFGLTYLEGQQPWSVPVDIALPCATQNELDVDAARVLIANGVKAVAEGANMPTTIEATDLFLEAGVLFAPGKAANAGGVATSGLEMAQNAARLSWKAEKVDARLHHIMLDIHHACVKYGGDNKHTNYVQGANIAGFVKVADAMLAQGVI.

Positions 92, 113, and 116 each coordinate substrate. K128 functions as the Proton donor in the catalytic mechanism. Substrate is bound at residue G167. NADP(+)-binding residues include T211 and N242. Position 380 (S380) interacts with substrate.

The protein belongs to the Glu/Leu/Phe/Val dehydrogenases family. Homohexamer.

It catalyses the reaction L-glutamate + NADP(+) + H2O = 2-oxoglutarate + NH4(+) + NADPH + H(+). Functionally, catalyzes the reversible oxidative deamination of glutamate to alpha-ketoglutarate and ammonia. This chain is NADP-specific glutamate dehydrogenase (gdhA), found in Salmonella typhi.